Consider the following 48-residue polypeptide: ATP synthase protein 8 (48 aa).

Residues 13 to 32 (VVFTLISLSFIFFVFSKYIL) form a helical membrane-spanning segment.

Belongs to the ATPase protein 8 family. In terms of assembly, F-type ATPases have 2 components, CF(1) - the catalytic core - and CF(0) - the membrane proton channel.

It localises to the mitochondrion membrane. Mitochondrial membrane ATP synthase (F(1)F(0) ATP synthase or Complex V) produces ATP from ADP in the presence of a proton gradient across the membrane which is generated by electron transport complexes of the respiratory chain. F-type ATPases consist of two structural domains, F(1) - containing the extramembraneous catalytic core and F(0) - containing the membrane proton channel, linked together by a central stalk and a peripheral stalk. During catalysis, ATP synthesis in the catalytic domain of F(1) is coupled via a rotary mechanism of the central stalk subunits to proton translocation. Part of the complex F(0) domain. Minor subunit located with subunit a in the membrane. This chain is ATP synthase protein 8 (ATP8), found in Trichophyton rubrum (Athlete's foot fungus).